The following is a 551-amino-acid chain: Mesoderm induction early response protein 3 (551 aa).

Low complexity predominate over residues 1–16; sequence MAEASFGSSSPVGSLS. Disordered stretches follow at residues 1–62 and 113–169; these read MAEA…EKEG and LSGD…GNSP. Over residues 17–36 the composition is skewed to basic and acidic residues; sequence SEDHDFDPTAEMLVHDYDDE. Phosphoserine is present on residues Ser52, Ser53, and Ser114. Over residues 121–134 the composition is skewed to polar residues; sequence QSSADDLTPSVTSH. The span at 154–163 shows a compositional bias: acidic residues; it reads KESEIEDVET. Ser156 carries the phosphoserine modification. The residue at position 163 (Thr163) is a Phosphothreonine. A phosphoserine mark is found at Ser165 and Ser168. Residues 174 to 273 enclose the ELM2 domain; the sequence is REIMIGLEYQ…EAIERYCCNG (100 aa). In terms of domain architecture, SANT spans 278–330; that stretch reads EGMTAWTEEECRSFEHALMLHGKDFHLIQKDKVRSRTVAECVAFYYMWKKSER.

It localises to the nucleus. Its function is as follows. Transcriptional repressor. The chain is Mesoderm induction early response protein 3 (Mier3) from Mus musculus (Mouse).